A 406-amino-acid chain; its full sequence is Argininosuccinate synthase (406 aa).

Residues 11–19 and alanine 38 contribute to the ATP site; that span reads AYSGGLDTS. Residues tyrosine 91 and serine 96 each coordinate L-citrulline. Glycine 121 is an ATP binding site. Positions 123, 127, and 128 each coordinate L-aspartate. Residue asparagine 127 participates in L-citrulline binding. The L-citrulline site is built by arginine 131, serine 181, serine 190, glutamate 266, and tyrosine 278.

Belongs to the argininosuccinate synthase family. Type 1 subfamily. As to quaternary structure, homotetramer.

The protein resides in the cytoplasm. The catalysed reaction is L-citrulline + L-aspartate + ATP = 2-(N(omega)-L-arginino)succinate + AMP + diphosphate + H(+). The protein operates within amino-acid biosynthesis; L-arginine biosynthesis; L-arginine from L-ornithine and carbamoyl phosphate: step 2/3. This is Argininosuccinate synthase from Campylobacter jejuni subsp. jejuni serotype O:2 (strain ATCC 700819 / NCTC 11168).